The chain runs to 118 residues: UPF0102 protein RSal33209_1090 (118 aa).

This sequence belongs to the UPF0102 family.

In Renibacterium salmoninarum (strain ATCC 33209 / DSM 20767 / JCM 11484 / NBRC 15589 / NCIMB 2235), this protein is UPF0102 protein RSal33209_1090.